The primary structure comprises 160 residues: Large ribosomal subunit protein uL11 (160 aa).

This sequence belongs to the universal ribosomal protein uL11 family. Part of the ribosomal stalk of the 50S ribosomal subunit. Interacts with L10 and the large rRNA to form the base of the stalk. L10 forms an elongated spine to which L12 dimers bind in a sequential fashion forming a multimeric L10(L12)X complex.

Forms part of the ribosomal stalk which helps the ribosome interact with GTP-bound translation factors. This chain is Large ribosomal subunit protein uL11, found in Nanoarchaeum equitans (strain Kin4-M).